We begin with the raw amino-acid sequence, 405 residues long: Potassium channel subfamily K member 13 (405 aa).

Over methionine 1–arginine 19 the chain is Cytoplasmic. A helical membrane pass occupies residues phenylalanine 20–alanine 40. Asparagine 59 and asparagine 65 each carry an N-linked (GlcNAc...) asparagine glycan. Residues tryptophan 95–methionine 115 constitute an intramembrane region (pore-forming). The K(+) site is built by threonine 110, isoleucine 111, and glycine 112. A selectivity filter 1 region spans residues threonine 110–methionine 115. Residues isoleucine 125–phenylalanine 145 traverse the membrane as a helical segment. Residues leucine 146–serine 193 are Cytoplasmic-facing. Residues valine 194–alanine 214 form a helical membrane-spanning segment. The pore-forming intramembrane region spans tyrosine 224 to valine 244. Residues threonine 237, isoleucine 238, glycine 239, and phenylalanine 240 each contribute to the K(+) site. Positions threonine 237–aspartate 242 are selectivity filter 2. A helical transmembrane segment spans residues phenylalanine 263–isoleucine 283. Over lysine 284–arginine 405 the chain is Cytoplasmic.

Belongs to the two pore domain potassium channel (TC 1.A.1.8) family. In terms of assembly, homodimer. Heterodimer with KCNK12.

Its subcellular location is the cell membrane. The catalysed reaction is K(+)(in) = K(+)(out). Its function is as follows. K(+) channel that conducts outward rectifying tonic currents potentiated by purinergic signals. Homo- and heterodimerizes to form functional channels with distinct regulatory and gating properties. Contributes most of K(+) currents at the plasma membrane of resting microglia. Maintains a depolarized membrane potential required for proper ramified microglia morphology and phagocytosis, selectively mediating microglial pruning of presynaptic compartments at hippocampal excitatory synapses. Upon local release of ATP caused by neuronal injury or infection, it is potentiated by P2RY12 and P2RX7 receptor signaling and contributes to ATP-triggered K(+) efflux underlying microglial NLRP3 inflammasome assembly and IL1B release. The protein is Potassium channel subfamily K member 13 of Mus musculus (Mouse).